The primary structure comprises 1120 residues: Transcription-repair-coupling factor (1120 aa).

Residues aspartate 591–isoleucine 756 enclose the Helicase ATP-binding domain. Position 604–611 (glycine 604–threonine 611) interacts with ATP. Residues aspartate 709–glutamine 712 carry the DEEQ box motif. Residues isoleucine 777–arginine 933 enclose the Helicase C-terminal domain.

In the N-terminal section; belongs to the UvrB family. The protein in the C-terminal section; belongs to the helicase family. RecG subfamily.

It localises to the cytoplasm. Its function is as follows. Couples transcription and DNA repair by recognizing RNA polymerase (RNAP) stalled at DNA lesions. Mediates ATP-dependent release of RNAP and its truncated transcript from the DNA, and recruitment of nucleotide excision repair machinery to the damaged site. This chain is Transcription-repair-coupling factor, found in Rickettsia typhi (strain ATCC VR-144 / Wilmington).